The chain runs to 1220 residues: Plasma membrane calcium-transporting ATPase 1 (1220 aa).

Gly2 carries the N-acetylglycine modification. Residues 2 to 105 (GDMANNSVAY…KTFLQLVWEA (104 aa)) are Cytoplasmic-facing. 2 positions are modified to phosphoserine: Ser8 and Ser17. The chain crosses the membrane as a helical span at residues 106 to 126 (LQDVTLIILEIAAIVSLGLSF). Residues 127 to 154 (YQPPEGDNALCGEVSVGEEEGEGETGWI) are Extracellular-facing. Residues 155 to 175 (EGAAILLSVVCVVLVTAFNDW) form a helical membrane-spanning segment. At 176-366 (SKEKQFRGLQ…KEKSVLQGKL (191 aa)) the chain is on the cytoplasmic side. The segment at 297–356 (EEEKKDEKKKEKKNKKQDGAIENRNKAKAQDGAAMEMQPLKSEEGGDGDEKDKKKANLPK) is disordered. 2 stretches are compositionally biased toward basic and acidic residues: residues 312-325 (KQDG…KAKA) and 337-356 (KSEE…NLPK). Ser338 carries the post-translational modification Phosphoserine. The chain crosses the membrane as a helical span at residues 367-386 (TKLAVQIGKAGLLMSAITVI). Residues 387–418 (ILVLYFVIDTFWVQKRPWLAECTPIYIQYFVK) lie on the Extracellular side of the membrane. The chain crosses the membrane as a helical span at residues 419–439 (FFIIGVTVLVVAVPEGLPLAV). The Cytoplasmic segment spans residues 440-855 (TISLAYSVKK…RNVYDSISKF (416 aa)). Residue Asp475 is the 4-aspartylphosphate intermediate of the active site. Mg(2+) is bound by residues Asp475, Thr477, and Asp797. Residues 856 to 876 (LQFQLTVNVVAVIVAFTGACI) form a helical membrane-spanning segment. At 877 to 882 (TQDSPL) the chain is on the extracellular side. Residues 883–903 (KAVQMLWVNLIMDTLASLALA) form a helical membrane-spanning segment. Topologically, residues 904 to 927 (TEPPTESLLLRKPYGRNKPLISRT) are cytoplasmic. The helical transmembrane segment at 928–948 (MMKNILGHAFYQLVVVFTLLF) threads the bilayer. The Extracellular segment spans residues 949 to 971 (AGEKFFDIDSGRNAPLHAPPSEH). A helical transmembrane segment spans residues 972–991 (YTIVFNTFVLMQLFNEINAR). The Cytoplasmic portion of the chain corresponds to 992–1005 (KIHGERNVFEGIFN). Residues 1006 to 1027 (NAIFCTIVLGTFVVQIIIVQFG) form a helical membrane-spanning segment. Topologically, residues 1028-1039 (GKPFSCSELSIE) are extracellular. Residues 1040–1060 (QWLWSIFLGMGTLLWGQLIST) traverse the membrane as a helical segment. Residues 1061–1220 (IPTSRLKFLK…SPLHSLETSL (160 aa)) are Cytoplasmic-facing. Positions 1100-1117 (LRRGQILWFRGLNRIQTQ) are calmodulin-binding subdomain A. At Thr1116 the chain carries Phosphothreonine; by PKC. The required for basolateral membrane targeting stretch occupies residues 1118 to 1220 (IRVVNAFRSS…SPLHSLETSL (103 aa)). Phosphoserine occurs at positions 1140 and 1155. The disordered stretch occupies residues 1160–1220 (PLIDDTDAED…SPLHSLETSL (61 aa)). The residue at position 1165 (Thr1165) is a Phosphothreonine. Residues Ser1178 and Ser1182 each carry the phosphoserine modification. Residues 1200 to 1220 (MNKSATSSSPGSPLHSLETSL) show a composition bias toward polar residues.

This sequence belongs to the cation transport ATPase (P-type) (TC 3.A.3) family. Type IIB subfamily. As to quaternary structure, monomer. Dimer. Oligomer. Calmodulin binding. Interacts with PDZD11. Interacts with SLC35G1 and STIM1. Interacts with YWHAE; interacts with the monomeric and dimeric forms of the YWHAE but prefer the monomer form; this interaction inhibits calcium-transporting ATPase activity. Interacts with NPTN; this interaction stabilizes ATP2B1 and increases ATPase activity; this interaction controls T cell calcium homeostasis following T cell activation. Interacts with EPB41; regulates small intestinal calcium absorption through regulation of membrane expression of ATP2B1. In terms of tissue distribution, expressed in the retina, with strongest expression in the outer plexiform layer and lower expression levels in the inner nuclear layer and the inner plexiform layer. Specifically expressed in the following retinal cell types: photoreceptor cells, cone bipolar cells and horizontal cells. Expressed in osteoclasts (at protein level). Expressed at highest levels in brain, intestine, kidney, and stomach, and at lower levels in liver, lung, aorta, portal vein, urinary bladder, diaphragm, seminal vesicles and testes. Expressed in small intestinal epithelium.

The protein localises to the cell membrane. Its subcellular location is the basolateral cell membrane. The protein resides in the synapse. It localises to the presynaptic cell membrane. It is found in the cytoplasmic vesicle. The protein localises to the secretory vesicle. Its subcellular location is the synaptic vesicle membrane. The catalysed reaction is Ca(2+)(in) + ATP + H2O = Ca(2+)(out) + ADP + phosphate + H(+). Catalyzes the hydrolysis of ATP coupled with the transport of calcium from the cytoplasm to the extracellular space thereby maintaining intracellular calcium homeostasis. Plays a role in blood pressure regulation through regulation of intracellular calcium concentration and nitric oxide production leading to regulation of vascular smooth muscle cells vasoconstriction. Positively regulates bone mineralization through absorption of calcium from the intestine. Plays dual roles in osteoclast differentiation and survival by regulating RANKL-induced calcium oscillations in preosteoclasts and mediating calcium extrusion in mature osteoclasts. Regulates insulin sensitivity through calcium/calmodulin signaling pathway by regulating AKT1 activation and NOS3 activation in endothelial cells. May play a role in synaptic transmission by modulating calcium and proton dynamics at the synaptic vesicles. The protein is Plasma membrane calcium-transporting ATPase 1 of Mus musculus (Mouse).